The sequence spans 295 residues: Protease HtpX (295 aa).

A run of 2 helical transmembrane segments spans residues 4–24 (ILLF…TLSL) and 41–61 (SSLL…SLFI). His-147 provides a ligand contact to Zn(2+). Residue Glu-148 is part of the active site. A Zn(2+)-binding site is contributed by His-151. The next 2 helical transmembrane spans lie at 158–178 (VTLA…ARII) and 199–219 (VATI…VMWF). Glu-224 contributes to the Zn(2+) binding site.

The protein belongs to the peptidase M48B family. The cofactor is Zn(2+).

It localises to the cell inner membrane. The chain is Protease HtpX from Pseudomonas putida (strain ATCC 700007 / DSM 6899 / JCM 31910 / BCRC 17059 / LMG 24140 / F1).